The primary structure comprises 356 residues: Peptide chain release factor 1 (356 aa).

Gln235 carries the N5-methylglutamine modification.

Belongs to the prokaryotic/mitochondrial release factor family. Post-translationally, methylated by PrmC. Methylation increases the termination efficiency of RF1.

It is found in the cytoplasm. Its function is as follows. Peptide chain release factor 1 directs the termination of translation in response to the peptide chain termination codons UAG and UAA. In Mycobacteroides abscessus (strain ATCC 19977 / DSM 44196 / CCUG 20993 / CIP 104536 / JCM 13569 / NCTC 13031 / TMC 1543 / L948) (Mycobacterium abscessus), this protein is Peptide chain release factor 1.